The primary structure comprises 775 residues: Transposon TX1 uncharacterized 82 kDa protein (775 aa).

Residues 1–10 (MGGNKKESYK) are compositionally biased toward basic and acidic residues. 3 disordered regions span residues 1-46 (MGGN…ASTS), 256-277 (PKGQ…KTSY), and 535-565 (PIQD…TSTV). The segment covering 35 to 46 (EPMSKSPIASTS) has biased composition (polar residues). Positions 539-549 (PADKTAGKDGE) are enriched in basic and acidic residues.

The polypeptide is Transposon TX1 uncharacterized 82 kDa protein (Xenopus laevis (African clawed frog)).